A 117-amino-acid chain; its full sequence is MSQELDYPSSLSAPTSRKAETFSYLPKMTTDQIKAQVEYIISKGWNPAIEHSEPENAFSYYWYMWKLPMFGDTDANVVLAEVDACIKANPNNHVRLIGYDNYAQSQGANMLVKRGDM.

This sequence belongs to the RuBisCO small chain family. As to quaternary structure, heterohexadecamer of 8 large and 8 small subunits.

Its function is as follows. RuBisCO catalyzes two reactions: the carboxylation of D-ribulose 1,5-bisphosphate, the primary event in carbon dioxide fixation, as well as the oxidative fragmentation of the pentose substrate. Both reactions occur simultaneously and in competition at the same active site. Although the small subunit is not catalytic it is essential for maximal activity. This chain is Ribulose bisphosphate carboxylase small subunit 1, found in Hydrogenovibrio marinus.